Reading from the N-terminus, the 146-residue chain is MRILVDADACPGKHMIEKAASENNVEVIMYCDINHRLESSYSEIKYVESGFQSVDMVIVNEVKKGDIVISQDYGLAALVLGKGAYAINPKGYIYDNDNIDRLLFERHMSGKIRRSGGKTFNPRKRMEEDDKRLYENLIFLIGKAKK.

This sequence belongs to the UPF0178 family.

The protein is UPF0178 protein CTC_02403 of Clostridium tetani (strain Massachusetts / E88).